The chain runs to 262 residues: 14-3-3 protein homolog (262 aa).

It belongs to the 14-3-3 family.

The protein is 14-3-3 protein homolog of Trichoderma harzianum (Hypocrea lixii).